A 66-amino-acid polypeptide reads, in one-letter code: Stress-induced protein KIN1 (66 aa).

Over residues 1 to 13 (MSETNKNAFQAGQ) the composition is skewed to polar residues. Positions 1–52 (MSETNKNAFQAGQTAGKAEEKSNVLLDKAKDAAAGAGAGAQQAGKSVSDAAA) are disordered. The span at 17–31 (KAEEKSNVLLDKAKD) shows a compositional bias: basic and acidic residues. Repeats lie at residues 31–35 (DAAAG) and 49–53 (DAAAG). Residues 32–45 (AAAGAGAGAQQAGK) are compositionally biased toward low complexity.

This is Stress-induced protein KIN1 (KIN1) from Arabidopsis thaliana (Mouse-ear cress).